A 74-amino-acid chain; its full sequence is MSAGTKASELRELGDEELLAKLREAKEELFNLRFQAATGQLENHGRLKAVRKDIARIYTLMRERELGIETVESA.

It belongs to the universal ribosomal protein uL29 family.

The chain is Large ribosomal subunit protein uL29 from Streptomyces avermitilis (strain ATCC 31267 / DSM 46492 / JCM 5070 / NBRC 14893 / NCIMB 12804 / NRRL 8165 / MA-4680).